Here is a 1227-residue protein sequence, read N- to C-terminus: Multifunctional 2-oxoglutarate metabolism enzyme (1227 aa).

Residues 1–41 (MSSSPSPFGQNEWLVEEMYRKFRDDPSSVDPSWHEFLVDYS) are 2-oxoglutarate dehydrogenase E1, N-terminal part. Positions 23-37 (RDDPSSVDPSWHEFL) are enriched in basic and acidic residues. The segment at 23–102 (RDDPSSVDPS…SATPAKGDES (80 aa)) is disordered. Residues 42 to 88 (PEPTTDSASNGRTTTAAPVTPPTPAPAPAPEPKAAPKPAAKTEAKPA) are linker. Residues 43–53 (EPTTDSASNGR) show a composition bias toward polar residues. Residues 60–76 (VTPPTPAPAPAPEPKAA) show a composition bias toward pro residues. A compositionally biased stretch (low complexity) spans 88–97 (AKPAKSATPA). Residues 89-335 (KPAKSATPAK…LRTIHQLLLD (247 aa)) are succinyltransferase E2. Residue histidine 314 is the Proton acceptor; for succinyltransferase activity of the active site. Positions 336–1227 (DDFFDEIFRE…QQEILDTAFG (892 aa)) are 2-oxoglutarate dehydrogenase E1, C-terminal part. Position 540 (arginine 540) interacts with thiamine diphosphate. 2-oxoglutarate is bound by residues histidine 579 and serine 604. 6 residues coordinate thiamine diphosphate: serine 604, leucine 606, aspartate 645, alanine 646, alanine 647, and asparagine 678. Residue aspartate 645 participates in Mg(2+) binding. Residues asparagine 678 and isoleucine 680 each coordinate Mg(2+). Residues 783 to 814 (DISMKEAEDALRDYQGQLERVFNEVRELEKHE) are a coiled coil. Histidine 1020 serves as a coordination point for 2-oxoglutarate. 7 residues coordinate acetyl-CoA: threonine 1038, arginine 1054, lysine 1089, serine 1092, glutamine 1142, arginine 1149, and arginine 1150.

This sequence belongs to the 2-oxoacid dehydrogenase family. Kgd subfamily. Homodimer. Interacts with the FHA domain of unphosphorylated GarA. The 2-oxoglutarate dehydrogenase (ODH) complex contains multiple copies of three enzymatic components: 2-oxoglutarate dehydrogenase (E1), dihydrolipoamide succinyltransferase (E2) and lipoamide dehydrogenase (E3). Mg(2+) is required as a cofactor. Requires thiamine diphosphate as cofactor.

The enzyme catalyses glyoxylate + 2-oxoglutarate + H(+) = 2-hydroxy-3-oxoadipate + CO2. The catalysed reaction is 2-oxoglutarate + H(+) = succinate semialdehyde + CO2. It catalyses the reaction N(6)-[(R)-lipoyl]-L-lysyl-[protein] + 2-oxoglutarate + H(+) = N(6)-[(R)-S(8)-succinyldihydrolipoyl]-L-lysyl-[protein] + CO2. It carries out the reaction N(6)-[(R)-dihydrolipoyl]-L-lysyl-[protein] + succinyl-CoA = N(6)-[(R)-S(8)-succinyldihydrolipoyl]-L-lysyl-[protein] + CoA. It participates in carbohydrate metabolism; tricarboxylic acid cycle; succinate from 2-oxoglutarate (transferase route): step 1/2. It functions in the pathway carbohydrate metabolism; tricarboxylic acid cycle; succinyl-CoA from 2-oxoglutarate (dehydrogenase route): step 1/1. Its activity is regulated as follows. Alpha-ketoglutarate dehydrogenase and decarboxylase activities are inhibited by unphosphorylated GarA, and allosterically activated by acetyl-CoA, the main substrate of the TCA cycle. Both the phosphoadenosine and acetyl moieties of acetyl-CoA are important for activation because neither CoA nor the synthetic compound S-(2-acetamidoethyl)-ethanethioate (which mimics the terminal acetyl-phosphopantetheine group of acetyl-CoA) has an activation effect. Shows three enzymatic activities that share a first common step, the attack of thiamine-PP on 2-oxoglutarate (alpha-ketoglutarate, KG), leading to the formation of an enamine-thiamine-PP intermediate upon decarboxylation. Thus, displays KGD activity, catalyzing the decarboxylation from five-carbon 2-oxoglutarate to four-carbon succinate semialdehyde (SSA). Also catalyzes C-C bond formation between the activated aldehyde formed after decarboxylation of alpha-ketoglutarate and the carbonyl of glyoxylate (GLX), to yield 2-hydroxy-3-oxoadipate (HOA), which spontaneously decarboxylates to form 5-hydroxylevulinate (HLA). And is also a component of the 2-oxoglutarate dehydrogenase (ODH) complex, that catalyzes the overall conversion of 2-oxoglutarate to succinyl-CoA and CO(2). The KG decarboxylase and KG dehydrogenase reactions provide two alternative, tightly regulated, pathways connecting the oxidative and reductive branches of the TCA cycle. This chain is Multifunctional 2-oxoglutarate metabolism enzyme (kgd), found in Mycolicibacterium smegmatis (strain ATCC 700084 / mc(2)155) (Mycobacterium smegmatis).